The chain runs to 213 residues: MAQLALLLLSLFLTLISLAPPGASISSCNGPCRDLNDCDGQLICIKGKCNDDPQVGTHICRGTTPSPQPGGCKPSGTLTCRGKSYPTYDCSPPVTSSTPAKLTNNDFSEGGDDGGPSECDESYHNNNERIVALSTGWYNGGSRCGKMIRITASNGKSVSAKVVDECDSRHGCDKEHAGQPPCRNNIVDGSNAVWSALGLDKNVGVVDITWSMA.

The first 24 residues, 1–24 (MAQLALLLLSLFLTLISLAPPGAS), serve as a signal peptide directing secretion. Intrachain disulfides connect Cys-28–Cys-60, Cys-32–Cys-44, and Cys-38–Cys-49. 4-hydroxyproline occurs at positions 65 and 67. 4 disulfides stabilise this stretch: Cys-72-Cys-90, Cys-80-Cys-172, Cys-119-Cys-144, and Cys-166-Cys-172. Residues 91-121 (SPPVTSSTPAKLTNNDFSEGGDDGGPSECDE) form a disordered region. Positions 93–107 (PVTSSTPAKLTNNDF) are enriched in polar residues.

It belongs to the kiwellin family. Undergoes proteolytic cleavage by actinidin to produce kissper and KiTH. Three forms of KiTH are produced by cleavage at different sites, the main form produced in vivo is KiTH-1.

The protein resides in the secreted. Functionally, pH-dependent, voltage-gated and anion-selective pore-forming peptide. This is Kiwellin from Actinidia deliciosa (Kiwi).